Here is an 878-residue protein sequence, read N- to C-terminus: Phosphoenolpyruvate carboxylase (878 aa).

Active-site residues include histidine 140 and lysine 545.

It belongs to the PEPCase type 1 family. Mg(2+) is required as a cofactor.

It catalyses the reaction oxaloacetate + phosphate = phosphoenolpyruvate + hydrogencarbonate. Functionally, forms oxaloacetate, a four-carbon dicarboxylic acid source for the tricarboxylic acid cycle. The polypeptide is Phosphoenolpyruvate carboxylase (Pseudomonas syringae pv. tomato (strain ATCC BAA-871 / DC3000)).